The chain runs to 357 residues: Alanine racemase, catabolic (357 aa).

Residue Lys33 is the Proton acceptor; specific for D-alanine of the active site. Lys33 is modified (N6-(pyridoxal phosphate)lysine). Residue Arg129 coordinates substrate. Residue Tyr253 is the Proton acceptor; specific for L-alanine of the active site. Met301 is a binding site for substrate.

The protein belongs to the alanine racemase family. Pyridoxal 5'-phosphate is required as a cofactor.

The catalysed reaction is L-alanine = D-alanine. The protein operates within amino-acid biosynthesis; D-alanine biosynthesis; D-alanine from L-alanine: step 1/1. In terms of biological role, isomerizes L-alanine to D-alanine which is then likely oxidized to pyruvate by DadA. Shows racemase activity with both alanine stereoisomers, negligible activity with D-cysteine and L-serine, and exhibits no activity with the remaining natural chiral amino acids. This chain is Alanine racemase, catabolic, found in Pseudomonas putida (strain ATCC 47054 / DSM 6125 / CFBP 8728 / NCIMB 11950 / KT2440).